We begin with the raw amino-acid sequence, 458 residues long: Putative long chain fatty acid-CoA ligase VraA (458 aa).

It belongs to the ATP-dependent AMP-binding enzyme family.

This chain is Putative long chain fatty acid-CoA ligase VraA (vraA), found in Staphylococcus aureus (strain MRSA252).